Consider the following 208-residue polypeptide: Small ribosomal subunit protein uS4 (208 aa).

Residues 95 to 157 (RRIDNIVYRA…DSLKKLVRSN (63 aa)) enclose the S4 RNA-binding domain.

This sequence belongs to the universal ribosomal protein uS4 family. In terms of assembly, part of the 30S ribosomal subunit. Contacts protein S5. The interaction surface between S4 and S5 is involved in control of translational fidelity.

One of the primary rRNA binding proteins, it binds directly to 16S rRNA where it nucleates assembly of the body of the 30S subunit. In terms of biological role, with S5 and S12 plays an important role in translational accuracy. In Borrelia duttonii (strain Ly), this protein is Small ribosomal subunit protein uS4.